The following is a 150-amino-acid chain: D-aminoacyl-tRNA deacylase (150 aa).

The Gly-cisPro motif, important for rejection of L-amino acids signature appears at 138 to 139 (GP).

The protein belongs to the DTD family. As to quaternary structure, homodimer.

It is found in the cytoplasm. The catalysed reaction is glycyl-tRNA(Ala) + H2O = tRNA(Ala) + glycine + H(+). It carries out the reaction a D-aminoacyl-tRNA + H2O = a tRNA + a D-alpha-amino acid + H(+). In terms of biological role, an aminoacyl-tRNA editing enzyme that deacylates mischarged D-aminoacyl-tRNAs. Also deacylates mischarged glycyl-tRNA(Ala), protecting cells against glycine mischarging by AlaRS. Acts via tRNA-based rather than protein-based catalysis; rejects L-amino acids rather than detecting D-amino acids in the active site. By recycling D-aminoacyl-tRNA to D-amino acids and free tRNA molecules, this enzyme counteracts the toxicity associated with the formation of D-aminoacyl-tRNA entities in vivo and helps enforce protein L-homochirality. The protein is D-aminoacyl-tRNA deacylase of Thermosipho melanesiensis (strain DSM 12029 / CIP 104789 / BI429).